Consider the following 664-residue polypeptide: Acetolactate synthase 2, chloroplastic (664 aa).

Residues 1–34 show a composition bias toward low complexity; it reads MAAAAAAPSPSFSKTLSSSSSKSSTLLPRSTFPF. Residues 1 to 51 form a disordered region; it reads MAAAAAAPSPSFSKTLSSSSSKSSTLLPRSTFPFPHHPHKTTPPPLHLTPT. The N-terminal 91 residues, 1-91, are a transit peptide targeting the chloroplast; the sequence is MAAAAAAPSP…VSRFAPDEPR (91 aa). E138 is a thiamine diphosphate binding site. C158 and C304 are joined by a disulfide. Residues R240, 346-367, and 389-408 contribute to the FAD site; these read HGTVYANYAVDSSDLLLAFGVR and DIDSAEIGKNKQPHVSICAD. The segment at 481–561 is thiamine pyrophosphate binding; it reads QHQMWAAQYY…VKIMLLNNQH (81 aa). The Mg(2+) site is built by D532 and N559.

This sequence belongs to the TPP enzyme family. Mg(2+) serves as cofactor. Requires thiamine diphosphate as cofactor.

The protein resides in the plastid. Its subcellular location is the chloroplast. It catalyses the reaction 2 pyruvate + H(+) = (2S)-2-acetolactate + CO2. It participates in amino-acid biosynthesis; L-isoleucine biosynthesis; L-isoleucine from 2-oxobutanoate: step 1/4. The protein operates within amino-acid biosynthesis; L-valine biosynthesis; L-valine from pyruvate: step 1/4. The polypeptide is Acetolactate synthase 2, chloroplastic (ALS SURB) (Nicotiana tabacum (Common tobacco)).